Here is a 448-residue protein sequence, read N- to C-terminus: Putative sodium-coupled neutral amino acid transporter 11 (448 aa).

The disordered stretch occupies residues 1–20 (MESERSCLLSSHDAGKGGSS). 11 consecutive transmembrane segments (helical) span residues 22 to 42 (VSSASFNFINSIIGSGIIGLP), 52 to 72 (MGLLLLILVAFITDYSIILLV), 94 to 114 (IGYIIVSVLQFLYPFIAMISY), 143 to 163 (FVIAMSTVLFTLPLSLYRDIA), 165 to 185 (LGKVSLLSMILTFGILMTVVV), 200 to 220 (AWVFARWNAIQAVAVMSFALI), 246 to 266 (ISVGSSVLVSAVFAAAGYATF), 286 to 306 (TFGRFCYGVSIITTFPLECFV), 324 to 344 (SSHVIITLVIISATTAISLSY), 346 to 366 (CLGIVLELNGILSAVPLMFIF), and 389 to 409 (MILVAGVFVMIIGLIMMALFP). 3 N-linked (GlcNAc...) asparagine glycosylation sites follow: Asn-425, Asn-440, and Asn-444.

The protein belongs to the amino acid/polyamine transporter 2 family.

It localises to the membrane. Putative sodium-dependent amino acid/proton antiporter. This chain is Putative sodium-coupled neutral amino acid transporter 11 (slc38a11), found in Danio rerio (Zebrafish).